Consider the following 111-residue polypeptide: Antitoxin PrlF (111 aa).

Residues 12-59 (TTESKVTIRGQTTIPAPVREALKLKPGQDSIHYEILPGGQVFMCRLGD) form the SpoVT-AbrB domain.

As to quaternary structure, homodimer; forms a complex with YhaV with stoichiometry PrlF(2)-YhaV(4), possibly as a YhaV(2)-PrlF(2)-YhaV(2) complex like the MazFE complex. This complex is seen to dimerize in solution.

It localises to the cytoplasm. In terms of biological role, antitoxin component of a type II toxin-antitoxin (TA) system. Labile antitoxin that binds to the YhaV toxin and neutralizes its ribonuclease activity. Also acts as a transcription factor. The YhaV/PrlF complex binds the prlF-yhaV operon, probably negatively regulating its expression. Negatively regulates its own expression as well as relieving the export block imposed by high-level synthesis of the LamB-LacZ hybrid protein. Overexpression leads to increased doubling time and also suppresses a htrA (degP) null phenotype. The sequence is that of Antitoxin PrlF (prlF) from Escherichia coli (strain K12).